The sequence spans 443 residues: MKVVPSLLLSVLLAQVWLVPGLAPSPQSPETPAPQNQTSRVVQAPREEEEDEQEASEEKAGDEEKAWLTASRQQLAKETSNFGFSLLRKISMRHDGNIVFSPFGTSLAMTGLMLGATGLTETQIKRGLHLQALNPTKPGLLPSLFKGLRETLSRNLELGLTQGSFAFIHKDFDVKETFLNLSKRYFDTECVPMNFRNASQAKRLMNHYINKETRGKIPKLFDEINPETKLILVDYILFKGKWLTPFDPVFTEVDTFHQDKYKTIKVPMMYGAGKFASTFDKNFCCHVLKLPYQGNVTMLVVLMEKMGDQLALEDYLTTDLVETWLRNMKTRNMEVFFPKFKLDQKYEMHELLRQMGIRRISPFADLSELSATGRNLQVSRVLQRTVIEVDERGTEAVAAILSEIIAYSMPPAIKVDRPFHFMIYEETSGMLLFLGRVVNPTLL.

The signal sequence occupies residues 1-23 (MKVVPSLLLSVLLAQVWLVPGLA). Positions 24–66 (PSPQSPETPAPQNQTSRVVQAPREEEEDEQEASEEKAGDEEKA) are disordered. Asn36 is a glycosylation site (N-linked (GlcNAc...) asparagine). Ser56 carries the post-translational modification Phosphoserine. Over residues 56–66 (SEEKAGDEEKA) the composition is skewed to basic and acidic residues. The segment at 136 to 153 (TKPGLLPSLFKGLRETLS) is heparin-binding. Residues Asn180 and Asn295 are each glycosylated (N-linked (GlcNAc...) asparagine).

Belongs to the serpin family. In terms of processing, phosphorylated by FAM20C in the extracellular medium.

It is found in the secreted. Functionally, inhibits activity of the coagulation protease factor Xa in the presence of PROZ, calcium and phospholipids. Also inhibits factor XIa in the absence of cofactors. The polypeptide is Protein Z-dependent protease inhibitor (SERPINA10) (Pongo abelii (Sumatran orangutan)).